The primary structure comprises 357 residues: UDP-N-acetylglucosamine--N-acetylmuramyl-(pentapeptide) pyrophosphoryl-undecaprenol N-acetylglucosamine transferase (357 aa).

The UDP-N-acetyl-alpha-D-glucosamine site is built by Arg-166, Ser-196, and Gln-290.

Belongs to the glycosyltransferase 28 family. MurG subfamily.

It localises to the cell membrane. The enzyme catalyses Mur2Ac(oyl-L-Ala-gamma-D-Glu-L-Lys-D-Ala-D-Ala)-di-trans,octa-cis-undecaprenyl diphosphate + UDP-N-acetyl-alpha-D-glucosamine = beta-D-GlcNAc-(1-&gt;4)-Mur2Ac(oyl-L-Ala-gamma-D-Glu-L-Lys-D-Ala-D-Ala)-di-trans,octa-cis-undecaprenyl diphosphate + UDP + H(+). It participates in cell wall biogenesis; peptidoglycan biosynthesis. Cell wall formation. Catalyzes the transfer of a GlcNAc subunit on undecaprenyl-pyrophosphoryl-MurNAc-pentapeptide (lipid intermediate I) to form undecaprenyl-pyrophosphoryl-MurNAc-(pentapeptide)GlcNAc (lipid intermediate II). The sequence is that of UDP-N-acetylglucosamine--N-acetylmuramyl-(pentapeptide) pyrophosphoryl-undecaprenol N-acetylglucosamine transferase from Staphylococcus epidermidis (strain ATCC 35984 / DSM 28319 / BCRC 17069 / CCUG 31568 / BM 3577 / RP62A).